A 509-amino-acid chain; its full sequence is Protein disulfide-isomerase (509 aa).

The first 18 residues, 1-18, serve as a signal peptide directing secretion; it reads MLRRAVLCLALAVTAGWA. The 117-residue stretch at 19–135 folds into the Thioredoxin 1 domain; the sequence is WAAEEEDNVL…IVNWLKKRTG (117 aa). Active-site nucleophile residues include Cys-54 and Cys-57. Cys-54 and Cys-57 are disulfide-bonded. Lys-223 and Lys-272 each carry N6-succinyllysine. Residues Ser-332 and Ser-358 each carry the phosphoserine modification. One can recognise a Thioredoxin 2 domain in the interval 347-476; the sequence is FLEGKIKPHL…FKKFLESGGQ (130 aa). Active-site nucleophile residues include Cys-398 and Cys-401. Cys-398 and Cys-401 form a disulfide bridge. Residue Ser-428 is modified to Phosphoserine. A disordered region spans residues 471 to 509; the sequence is LESGGQDGAGDEDGLEDLEEAEEPDLEEDDDQKAVRDEL. The segment covering 479 to 501 has biased composition (acidic residues); that stretch reads AGDEDGLEDLEEAEEPDLEEDDD. The Prevents secretion from ER signature appears at 506–509; it reads RDEL.

This sequence belongs to the protein disulfide isomerase family. Heterodimer; heterodimerizes with the protein microsomal triglyceride transfer MTTP. Homodimer. Monomers and homotetramers may also occur. Interacts with P4HA2, forming a heterotetramer consisting of 2 alpha subunits (P4HA2) and 2 beta (P4HB), where P4HB plays the role of a structural subunit; this tetramer catalyzes the formation of 4-hydroxyproline in collagen. Also constitutes the structural subunit of the microsomal triacylglycerol transfer protein MTTP in mammalian cells. Stabilizes both enzymes and retain them in the ER without contributing to the catalytic activity. Binds UBQLN1. Interacts with ERO1B. Interacts with ILDR2. Interacts with ERN1/IRE1A (via N-terminus); the interaction is enhanced by phosphorylation of P4HB by FAM20C in response to endoplasmic reticulum stress and results in attenuation of ERN1 activity. Phosphorylation of Ser-358 by FAM20C is induced by endoplasmic reticulum stress and results in a functional switch from oxidoreductase to molecular chaperone. It also promotes interaction with ERN1.

The protein localises to the endoplasmic reticulum. The protein resides in the endoplasmic reticulum lumen. It localises to the melanosome. Its subcellular location is the cell membrane. The catalysed reaction is Catalyzes the rearrangement of -S-S- bonds in proteins.. Functionally, this multifunctional protein catalyzes the formation, breakage and rearrangement of disulfide bonds. At the cell surface, seems to act as a reductase that cleaves disulfide bonds of proteins attached to the cell. May therefore cause structural modifications of exofacial proteins. Inside the cell, seems to form/rearrange disulfide bonds of nascent proteins. At high concentrations and following phosphorylation by FAM20C, functions as a chaperone that inhibits aggregation of misfolded proteins. At low concentrations, facilitates aggregation (anti-chaperone activity). May be involved with other chaperones in the structural modification of the TG precursor in hormone biogenesis. Also acts as a structural subunit of various enzymes such as prolyl 4-hydroxylase and microsomal triacylglycerol transfer protein MTTP. Receptor for LGALS9; the interaction retains P4HB at the cell surface of Th2 T helper cells, increasing disulfide reductase activity at the plasma membrane, altering the plasma membrane redox state and enhancing cell migration. This Oryctolagus cuniculus (Rabbit) protein is Protein disulfide-isomerase (P4HB).